We begin with the raw amino-acid sequence, 575 residues long: Beta-amylase (575 aa).

Residues 1 to 36 form the signal peptide; it reads MLHSQKRIWKKIGLCLLSFILGITVFTGSFGSKAEA. Asp-77 serves as a coordination point for substrate. Ca(2+) is bound by residues Glu-84 and Asp-88. Residues His-117 and Asp-125 each coordinate substrate. A disulfide bridge connects residues Cys-119 and Cys-127. Glu-171 is a binding site for Ca(2+). The active-site Proton donor is the Glu-199. Lys-315, His-320, and Thr-358 together coordinate substrate. Residue Glu-395 is the Proton acceptor of the active site. Residues 396–397 and Arg-424 each bind substrate; that span reads NA.

It belongs to the glycosyl hydrolase 14 family. As to quaternary structure, monomer. The cofactor is Ca(2+).

The enzyme catalyses Hydrolysis of (1-&gt;4)-alpha-D-glucosidic linkages in polysaccharides so as to remove successive maltose units from the non-reducing ends of the chains.. In Niallia circulans (Bacillus circulans), this protein is Beta-amylase.